The following is a 396-amino-acid chain: S-adenosylmethionine synthase (396 aa).

H15 contacts ATP. D17 contacts Mg(2+). Residue E43 participates in K(+) binding. E56 and Q99 together coordinate L-methionine. The flexible loop stretch occupies residues 99-109; it reads QSSDIAMGVDK. ATP-binding positions include 175 to 177, 241 to 242, D250, 256 to 257, A273, and K277; these read DGK, RF, and RK. D250 serves as a coordination point for L-methionine. Residue K281 coordinates L-methionine.

It belongs to the AdoMet synthase family. In terms of assembly, homotetramer; dimer of dimers. Mg(2+) is required as a cofactor. Requires K(+) as cofactor.

The protein localises to the cytoplasm. The catalysed reaction is L-methionine + ATP + H2O = S-adenosyl-L-methionine + phosphate + diphosphate. The protein operates within amino-acid biosynthesis; S-adenosyl-L-methionine biosynthesis; S-adenosyl-L-methionine from L-methionine: step 1/1. Functionally, catalyzes the formation of S-adenosylmethionine (AdoMet) from methionine and ATP. The overall synthetic reaction is composed of two sequential steps, AdoMet formation and the subsequent tripolyphosphate hydrolysis which occurs prior to release of AdoMet from the enzyme. This chain is S-adenosylmethionine synthase, found in Ruminiclostridium cellulolyticum (strain ATCC 35319 / DSM 5812 / JCM 6584 / H10) (Clostridium cellulolyticum).